The sequence spans 74 residues: Large ribosomal subunit protein bL31 (74 aa).

The Zn(2+) site is built by Cys16, Cys18, Cys38, and Cys41.

The protein belongs to the bacterial ribosomal protein bL31 family. Type A subfamily. Part of the 50S ribosomal subunit. It depends on Zn(2+) as a cofactor.

Its function is as follows. Binds the 23S rRNA. This chain is Large ribosomal subunit protein bL31, found in Salinispora arenicola (strain CNS-205).